Consider the following 302-residue polypeptide: N-acetyl-D-glucosamine kinase (302 aa).

ATP contacts are provided by residues glycine 4 to lysine 11 and glycine 133 to tyrosine 140. Zn(2+)-binding residues include histidine 157, cysteine 177, cysteine 179, and cysteine 184.

The protein belongs to the ROK (NagC/XylR) family. NagK subfamily.

The catalysed reaction is N-acetyl-D-glucosamine + ATP = N-acetyl-D-glucosamine 6-phosphate + ADP + H(+). Its pathway is cell wall biogenesis; peptidoglycan recycling. Its function is as follows. Catalyzes the phosphorylation of N-acetyl-D-glucosamine (GlcNAc) derived from cell-wall degradation, yielding GlcNAc-6-P. The chain is N-acetyl-D-glucosamine kinase from Vibrio cholerae serotype O1 (strain ATCC 39315 / El Tor Inaba N16961).